A 211-amino-acid polypeptide reads, in one-letter code: Proteasome subunit beta (211 aa).

A propeptide spans 1–9 (MDNDKYLKG) (removed in mature form; by autocatalysis). The active-site Nucleophile is Thr10.

It belongs to the peptidase T1B family. As to quaternary structure, the 20S proteasome core is composed of 14 alpha and 14 beta subunits that assemble into four stacked heptameric rings, resulting in a barrel-shaped structure. The two inner rings, each composed of seven catalytic beta subunits, are sandwiched by two outer rings, each composed of seven alpha subunits. The catalytic chamber with the active sites is on the inside of the barrel. Has a gated structure, the ends of the cylinder being occluded by the N-termini of the alpha-subunits. Is capped at one or both ends by the proteasome regulatory ATPase, PAN.

It localises to the cytoplasm. It carries out the reaction Cleavage of peptide bonds with very broad specificity.. With respect to regulation, the formation of the proteasomal ATPase PAN-20S proteasome complex, via the docking of the C-termini of PAN into the intersubunit pockets in the alpha-rings, triggers opening of the gate for substrate entry. Interconversion between the open-gate and close-gate conformations leads to a dynamic regulation of the 20S proteasome proteolysis activity. Its function is as follows. Component of the proteasome core, a large protease complex with broad specificity involved in protein degradation. In Methanosarcina barkeri (strain Fusaro / DSM 804), this protein is Proteasome subunit beta.